Reading from the N-terminus, the 295-residue chain is Protein FAM110A (295 aa).

2 disordered regions span residues 117-148 (PVSP…PPSI) and 160-191 (PASP…KSDL). 2 stretches are compositionally biased toward pro residues: residues 138–147 (LATPPRPPPS) and 160–171 (PASPIQPCPSPG).

This sequence belongs to the FAM110 family. In terms of assembly, may interact with CSPP1.

Its subcellular location is the cytoplasm. The protein resides in the cytoskeleton. It is found in the microtubule organizing center. It localises to the centrosome. The protein localises to the spindle pole. The protein is Protein FAM110A (FAM110A) of Bos taurus (Bovine).